The following is a 315-amino-acid chain: Glycerol-3-phosphate dehydrogenase [NAD(P)+] (315 aa).

NADPH-binding residues include W24, R44, R45, and K92. K92 and G120 together coordinate sn-glycerol 3-phosphate. NADPH is bound at residue S124. Residues K175, D228, S238, R239, and N240 each coordinate sn-glycerol 3-phosphate. K175 functions as the Proton acceptor in the catalytic mechanism. Residue R239 coordinates NADPH. E265 lines the NADPH pocket.

It belongs to the NAD-dependent glycerol-3-phosphate dehydrogenase family.

The protein localises to the cytoplasm. It carries out the reaction sn-glycerol 3-phosphate + NAD(+) = dihydroxyacetone phosphate + NADH + H(+). The enzyme catalyses sn-glycerol 3-phosphate + NADP(+) = dihydroxyacetone phosphate + NADPH + H(+). It functions in the pathway membrane lipid metabolism; glycerophospholipid metabolism. Its function is as follows. Catalyzes the reduction of the glycolytic intermediate dihydroxyacetone phosphate (DHAP) to sn-glycerol 3-phosphate (G3P), the key precursor for phospholipid synthesis. In Synechococcus sp. (strain JA-2-3B'a(2-13)) (Cyanobacteria bacterium Yellowstone B-Prime), this protein is Glycerol-3-phosphate dehydrogenase [NAD(P)+].